The chain runs to 636 residues: uncharacterized protein (636 aa).

A run of 3 helical transmembrane segments spans residues 12-32 (AVIYAALILILLFVYGIFGSI), 34-54 (IMHLGVIDAIYYTITTVTTTG), and 75-95 (IGAGFLLYIFTLMLSVMFMSF). One can recognise an RCK N-terminal domain in the interval 112–231 (KNHFILCGFG…KKAGANRIIS (120 aa)).

Its subcellular location is the cell membrane. This is an uncharacterized protein from Methanothermus fervidus (strain ATCC 43054 / DSM 2088 / JCM 10308 / V24 S).